A 196-amino-acid chain; its full sequence is Pyridoxal 5'-phosphate synthase subunit PdxT (196 aa).

Position 56 to 58 (56 to 58) interacts with L-glutamine; that stretch reads GES. Cys-85 (nucleophile) is an active-site residue. Residues Arg-113 and 141-142 contribute to the L-glutamine site; that span reads IR. Residues His-177 and Glu-179 each act as charge relay system in the active site.

This sequence belongs to the glutaminase PdxT/SNO family. In the presence of PdxS, forms a dodecamer of heterodimers. Only shows activity in the heterodimer.

It catalyses the reaction aldehydo-D-ribose 5-phosphate + D-glyceraldehyde 3-phosphate + L-glutamine = pyridoxal 5'-phosphate + L-glutamate + phosphate + 3 H2O + H(+). The catalysed reaction is L-glutamine + H2O = L-glutamate + NH4(+). Its pathway is cofactor biosynthesis; pyridoxal 5'-phosphate biosynthesis. Functionally, catalyzes the hydrolysis of glutamine to glutamate and ammonia as part of the biosynthesis of pyridoxal 5'-phosphate. The resulting ammonia molecule is channeled to the active site of PdxS. The sequence is that of Pyridoxal 5'-phosphate synthase subunit PdxT from Methanospirillum hungatei JF-1 (strain ATCC 27890 / DSM 864 / NBRC 100397 / JF-1).